A 312-amino-acid polypeptide reads, in one-letter code: Taste receptor type 2 member 7 (312 aa).

At 1-9 (MTYETDTTL) the chain is on the extracellular side. The chain crosses the membrane as a helical span at residues 10–30 (MFVAVCEALVGILGNAFIALV). Topologically, residues 31–49 (NFMGWMKNRKITAIDLILS) are cytoplasmic. A helical transmembrane segment spans residues 50–70 (SLAMSRICLQCIILLDCIILV). Residues 71-101 (QYPDTYNRGKEMRIIDFFWTLTNHLSVWFAT) lie on the Extracellular side of the membrane. The chain crosses the membrane as a helical span at residues 102 to 122 (CLSIFYFFKIANFFHPLFLWI). Residues 123-128 (KWRIDK) lie on the Cytoplasmic side of the membrane. The chain crosses the membrane as a helical span at residues 129-149 (LILRTLLACLILSLCFSLPVT). The Extracellular portion of the chain corresponds to 150-187 (ENLTDDFRRCVKTKERINSTLRCKLNKAGYASVKVNLN). Asn-151 and Asn-167 each carry an N-linked (GlcNAc...) asparagine glycan. The chain crosses the membrane as a helical span at residues 188–208 (LVMLFPFSVSLVSFLLLILSL). At 209–235 (WRHTRQMQLNVTGYNDPSTTAHVKATK) the chain is on the cytoplasmic side. The chain crosses the membrane as a helical span at residues 236–256 (AVISFLVLFIVYCLAFLIATS). Residues 257-266 (SYFMPESELA) are Extracellular-facing. The helical transmembrane segment at 267 to 287 (VIWGELIALIYPSSHSFILIL) threads the bilayer. The Cytoplasmic segment spans residues 288-312 (GNSKLKQASVRVLCRVKTMLKGRKY).

The protein belongs to the G-protein coupled receptor T2R family. In terms of tissue distribution, expressed in subsets of taste receptor cells of the tongue and palate epithelium and exclusively in gustducin-positive cells. Expressed in 15% taste bud cells in circumvallate and foliate papillae but only in 2% in fungiform papillae. Expressed in the duodenum, antrum and fundus (part of the stomach) and in gastric endocrine cells.

The protein localises to the membrane. Gustducin-coupled receptor implicated in the perception of bitter compounds in the oral cavity and the gastrointestinal tract. Signals through PLCB2 and the calcium-regulated cation channel TRPM5. This is Taste receptor type 2 member 7 (Tas2r7) from Rattus norvegicus (Rat).